Consider the following 351-residue polypeptide: Signal recognition particle receptor FtsY (351 aa).

GTP contacts are provided by residues 152-159 (GVNGSGKT), 235-239 (DTAGR), and 299-302 (TKMD).

Belongs to the GTP-binding SRP family. FtsY subfamily. As to quaternary structure, part of the signal recognition particle protein translocation system, which is composed of SRP and FtsY.

The protein localises to the cell membrane. Its subcellular location is the cytoplasm. The enzyme catalyses GTP + H2O = GDP + phosphate + H(+). Functionally, involved in targeting and insertion of nascent membrane proteins into the cytoplasmic membrane. Acts as a receptor for the complex formed by the signal recognition particle (SRP) and the ribosome-nascent chain (RNC). This chain is Signal recognition particle receptor FtsY, found in Metamycoplasma hominis (strain ATCC 23114 / DSM 25592 / NBRC 14850 / NCTC 10111 / PG21) (Mycoplasma hominis).